The sequence spans 470 residues: Flavin-containing monooxygenase FMO GS-OX-like 6 (470 aa).

17-22 lines the FAD pocket; sequence GAGAAG. An NADP(+)-binding site is contributed by 214-219; it reads GYQSSG.

The protein belongs to the FMO family. FAD is required as a cofactor.

In terms of biological role, catalyzes the conversion of methylthioalkyl glucosinolates of any chain length into methylsulfinylalkyl glucosinolates. The chain is Flavin-containing monooxygenase FMO GS-OX-like 6 from Arabidopsis thaliana (Mouse-ear cress).